The chain runs to 407 residues: Arrestin domain-containing protein 2 (407 aa).

This sequence belongs to the arrestin family. As to quaternary structure, interacts with WWP1 (via WW domains).

The sequence is that of Arrestin domain-containing protein 2 (Arrdc2) from Mus musculus (Mouse).